We begin with the raw amino-acid sequence, 489 residues long: NSGALLWPLIWGLLLIGTQALDKEAQLRDKVFENYNINVRPARTPDQRVVVQVGMTLAHVISVSEKDEELKTKVYLEMAWNDQRLSWDPKQYGGIESLRISSSQVWTPDIVLMNNNDGNFNFALQVDVLVSPNGNVTWHPPGLYVSSCSIEVQYYPFDWQNCSMVFRSYTYGADEVTLVHPKDANGKEVTQAVIFPNTFEENGQWVIRHRSSRKNSSPNDPLYEDITFYLVIQRKPLFYIVNVIVPCILITILAIFVFYLPPDAGEKMTLSIFALLTLTVFLLLLADKVPETSLGVPIIVNYLIFTMTLVTFSVIFSVVVLNLHHRSPNTHHMPQWVKQIFIHYLPKYLCIRRPKPETPLPVAPPPRQVTSTRHADEYFIRRPENDFFLPKQERYHADPFSRDMKWFLEGPSLGLVLPRDLQSAVTAIRYLAQQLQEQEDYDTLKEDWQYVAMVVDRLFLWTFIAFTSLGTLSIFLDANFNLPPDTPFP.

Residues 1 to 20 (NSGALLWPLIWGLLLIGTQA) form the signal peptide. The Extracellular segment spans residues 21-235 (LDKEAQLRDK…ITFYLVIQRK (215 aa)). N135 and N161 each carry an N-linked (GlcNAc...) asparagine glycan. The cysteines at positions 148 and 162 are disulfide-linked. Helical transmembrane passes span 236–260 (PLFYIVNVIVPCILITILAIFVFYL), 268–286 (MTLSIFALLTLTVFLLLLA), and 302–323 (YLIFTMTLVTFSVIFSVVVLNL). At 324-457 (HHRSPNTHHM…WQYVAMVVDR (134 aa)) the chain is on the cytoplasmic side. Residues 458 to 476 (LFLWTFIAFTSLGTLSIFL) form a helical membrane-spanning segment.

The protein belongs to the ligand-gated ion channel (TC 1.A.9) family. Acetylcholine receptor (TC 1.A.9.1) subfamily. Beta-1/CHRNB1 sub-subfamily. Pentamer of two alpha chains, and one each of the beta, delta, and gamma (in immature muscle) or epsilon (in mature muscle) chains.

It is found in the postsynaptic cell membrane. The protein localises to the cell membrane. The catalysed reaction is K(+)(in) = K(+)(out). The enzyme catalyses Na(+)(in) = Na(+)(out). Functionally, after binding acetylcholine, the AChR responds by an extensive change in conformation that affects all subunits and leads to opening of an ion-conducting channel across the plasma membrane. This chain is Acetylcholine receptor subunit beta (chrnb1), found in Xenopus laevis (African clawed frog).